The primary structure comprises 420 residues: Transcriptional adapter 2-beta (420 aa).

Residues 4-59 form a ZZ-type zinc finger; that stretch reads LSKKYCVYCLADVTSLRLRCTECQDIELCTDCFSAGAEIGNHRRWHGYQLVDGGRF. Zn(2+) contacts are provided by C9, C12, C23, C26, C32, C35, H45, and H49. The 54-residue stretch at 65-118 folds into the SANT domain; that stretch reads EAEGGWTSREEQLLLDAIEQFGFGNWEDMAAHVGASRTPTEVMEHYVTMYIHGN. A disordered region spans residues 303-333; sequence EESAEYEAARHKREKRKENKNIANSKRGRED.

The protein resides in the nucleus. In terms of biological role, transcriptional coactivator. This Xenopus laevis (African clawed frog) protein is Transcriptional adapter 2-beta (tada2b).